We begin with the raw amino-acid sequence, 459 residues long: Cysteine--tRNA ligase (459 aa).

Cysteine 29 lines the Zn(2+) pocket. The 'HIGH' region motif lies at 31–41 (PTVYNLVHIGN). Residues cysteine 209, histidine 234, and glutamate 238 each coordinate Zn(2+). The 'KMSKS' region signature appears at 267-271 (KMSKS). Position 270 (lysine 270) interacts with ATP.

This sequence belongs to the class-I aminoacyl-tRNA synthetase family. As to quaternary structure, monomer. Requires Zn(2+) as cofactor.

The protein resides in the cytoplasm. It carries out the reaction tRNA(Cys) + L-cysteine + ATP = L-cysteinyl-tRNA(Cys) + AMP + diphosphate. The chain is Cysteine--tRNA ligase from Saccharophagus degradans (strain 2-40 / ATCC 43961 / DSM 17024).